The following is a 423-amino-acid chain: Glucuronoxylanase XynC (423 aa).

Positions 1–33 (MMSSVKKTICVLLVCFTMMSVMLLGPGVTEVSA) are cleaved as a signal peptide. Catalysis depends on Glu-172, which acts as the Proton donor. The Nucleophile role is filled by Glu-261.

It belongs to the glycosyl hydrolase 30 family.

Its subcellular location is the secreted. It carries out the reaction Endohydrolysis of (1-&gt;4)-beta-D-xylosyl links in some glucuronoarabinoxylans.. Its pathway is glycan degradation; xylan degradation. Catalyzes the depolymerization of methylglucuronoxylan (MeGAXn). It cleaves the beta-1,4-xylosidic bond penultimate to that linking carbon one of the xylose residue substituted with alpha-1,2-linked 4-O-methyl-D-glucuronate (MeGA). This chain is Glucuronoxylanase XynC (xynC), found in Bacillus subtilis.